A 590-amino-acid polypeptide reads, in one-letter code: Aspartate--tRNA(Asp/Asn) ligase (590 aa).

Glu176 lines the L-aspartate pocket. Positions 200–203 (QLFK) are aspartate. L-aspartate contacts are provided by Arg222 and His451. 222 to 224 (RDE) serves as a coordination point for ATP. Glu485 serves as a coordination point for ATP. Arg492 contacts L-aspartate. An ATP-binding site is contributed by 537–540 (GIDR).

It belongs to the class-II aminoacyl-tRNA synthetase family. Type 1 subfamily. Homodimer.

Its subcellular location is the cytoplasm. The enzyme catalyses tRNA(Asx) + L-aspartate + ATP = L-aspartyl-tRNA(Asx) + AMP + diphosphate. Functionally, aspartyl-tRNA synthetase with relaxed tRNA specificity since it is able to aspartylate not only its cognate tRNA(Asp) but also tRNA(Asn). Reaction proceeds in two steps: L-aspartate is first activated by ATP to form Asp-AMP and then transferred to the acceptor end of tRNA(Asp/Asn). This Ehrlichia chaffeensis (strain ATCC CRL-10679 / Arkansas) protein is Aspartate--tRNA(Asp/Asn) ligase.